Here is a 214-residue protein sequence, read N- to C-terminus: Ribosomal RNA small subunit methyltransferase G (214 aa).

Residues Gly72, Phe77, 125 to 126 (VE), and Arg141 contribute to the S-adenosyl-L-methionine site.

Belongs to the methyltransferase superfamily. RNA methyltransferase RsmG family.

It localises to the cytoplasm. It catalyses the reaction guanosine(527) in 16S rRNA + S-adenosyl-L-methionine = N(7)-methylguanosine(527) in 16S rRNA + S-adenosyl-L-homocysteine. Functionally, specifically methylates the N7 position of guanine in position 527 of 16S rRNA. This is Ribosomal RNA small subunit methyltransferase G from Sinorhizobium fredii (strain NBRC 101917 / NGR234).